The chain runs to 115 residues: NADH-ubiquinone oxidoreductase chain 3 (115 aa).

The next 3 helical transmembrane spans lie at 3-23, 55-75, and 84-104; these read FMLT…IAFW, FFLV…LLPL, and LEVM…SLAY.

Belongs to the complex I subunit 3 family. In terms of assembly, core subunit of respiratory chain NADH dehydrogenase (Complex I) which is composed of 45 different subunits. Interacts with TMEM186. Interacts with TMEM242.

Its subcellular location is the mitochondrion inner membrane. The catalysed reaction is a ubiquinone + NADH + 5 H(+)(in) = a ubiquinol + NAD(+) + 4 H(+)(out). Its function is as follows. Core subunit of the mitochondrial membrane respiratory chain NADH dehydrogenase (Complex I) which catalyzes electron transfer from NADH through the respiratory chain, using ubiquinone as an electron acceptor. Essential for the catalytic activity of complex I. This chain is NADH-ubiquinone oxidoreductase chain 3, found in Rhinolophus pumilus (Horseshoe bat).